We begin with the raw amino-acid sequence, 537 residues long: Woronin body major protein hexA (537 aa).

Composition is skewed to basic and acidic residues over residues Met1–Gln17, Asp59–Arg70, and Asp116–Asn134. Disordered stretches follow at residues Met1–Ala20, Asp59–Arg79, Asp116–Tyr200, and Pro269–Ser295. Residues Asn135 to Asn144 are compositionally biased toward low complexity. The segment covering Leu272–Ser281 has biased composition (basic and acidic residues).

It belongs to the eIF-5A family. Hex1 subfamily. As to quaternary structure, forms oligomers. Self-assembles into hexagonal rods. Binds directly or indirectly to the Woronin body tether lah.

The protein resides in the cell septum. It is found in the cytoplasm. Functionally, major component of Woronin bodies, fungal-specific organelles that occlude septal pores in order to separate intact from damaged compartments. HexA binds directly or indirectly to the Woronin body tether that in turn is anchored at the rim of the septal pore. Woronin bodies are important for stress resistance and virulence. In Aspergillus fumigatus (strain ATCC MYA-4609 / CBS 101355 / FGSC A1100 / Af293) (Neosartorya fumigata), this protein is Woronin body major protein hexA.